The chain runs to 115 residues: Chaperone protein PrsD (115 aa).

Belongs to the periplasmic pilus chaperone family.

Its subcellular location is the periplasm. Its function is as follows. Mediates assembly of pili by forming soluble multimeric complexes with pili subunits as an intermediate step in the assembly process. This is Chaperone protein PrsD (prsD) from Escherichia coli.